Reading from the N-terminus, the 227-residue chain is MKPIPQTEAELLQRANQIAGCSFAELAEEANMDVPLDLKRDKGWVGQLLEWHLGAPAGSKPQQDFSELGIELKSIPVSYSGKPLETTFVCVAPLTGVHGLTWETSHVRNKLSRVLWIPVEGEREIPLAERHVGTPLLWSPNDEEEILLKNDWEELMEMIVFGQFDQISARHGVALHLRPKAANSKALTEAYNINGKPIKTLPRGFYLRTQFTAQILQNAFNSLLNEE.

It belongs to the MutH family.

It localises to the cytoplasm. Its function is as follows. Sequence-specific endonuclease that cleaves unmethylated GATC sequences. It is involved in DNA mismatch repair. In Vibrio vulnificus (strain CMCP6), this protein is DNA mismatch repair protein MutH.